We begin with the raw amino-acid sequence, 159 residues long: MTHLFTHINQDGKANMVDVTDKNTTQRQAIAQAYVEMKAETLALILNGQHHKGDVFATARIAGIMAAKKTSDIIPLCHPLALTKVEVELVAEPEFNRVRIQSLCKLSGKTGVEMEALTAASVAALTIYDMCKAIQKDMVITQVKLLEKTGGKSGHFTSQ.

Substrate is bound by residues 76–78 and 114–115; these read LCH and ME. Asp129 is an active-site residue.

It belongs to the MoaC family. As to quaternary structure, homohexamer; trimer of dimers.

The enzyme catalyses (8S)-3',8-cyclo-7,8-dihydroguanosine 5'-triphosphate = cyclic pyranopterin phosphate + diphosphate. Its pathway is cofactor biosynthesis; molybdopterin biosynthesis. Catalyzes the conversion of (8S)-3',8-cyclo-7,8-dihydroguanosine 5'-triphosphate to cyclic pyranopterin monophosphate (cPMP). The polypeptide is Cyclic pyranopterin monophosphate synthase (Psychromonas ingrahamii (strain DSM 17664 / CCUG 51855 / 37)).